We begin with the raw amino-acid sequence, 256 residues long: Major prion protein 2 (256 aa).

An N-terminal signal peptide occupies residues 1-24 (MVKSHIGSWILVLFVAMWSDVALC). Residues 25 to 233 (KKRPKPGGGW…ESEAYYQRGA (209 aa)) are interaction with GRB2, ERI3 and SYN1. The interval 28 to 110 (PKPGGGWNTG…QWNKPSKPKT (83 aa)) is disordered. 5 consecutive repeat copies span residues 54 to 62 (PQEGGDWGQ), 63 to 70 (PHGGGWGQ), 71 to 78 (PHVGGWGQ), 79 to 86 (PHGGGWGQ), and 87 to 95 (PHGGGGWGQ). Residues 54–95 (PQEGGDWGQPHGGGWGQPHVGGWGQPHGGGWGQPHGGGGWGQ) form a 5 X 8 AA tandem repeats of P-H-G-G-G-W-G-Q region. The span at 58–99 (GDWGQPHGGGWGQPHVGGWGQPHGGGWGQPHGGGGWGQGGTH) shows a compositional bias: gly residues. Residues His-64, Gly-65, Gly-66, His-72, Gly-74, His-80, Gly-81, Gly-82, His-88, Gly-90, and Gly-91 each contribute to the Cu(2+) site. A disulfide bridge links Cys-182 with Cys-217. Residues Asn-184 and Asn-200 are each glycosylated (N-linked (GlcNAc...) asparagine). Ala-233 carries GPI-anchor amidated alanine lipidation. Positions 234 to 256 (SVILFSSPPVILLISFLIFLIVG) are cleaved as a propeptide — removed in mature form.

Belongs to the prion family. Monomer and homodimer. Has a tendency to aggregate into amyloid fibrils containing a cross-beta spine, formed by a steric zipper of superposed beta-strands. Soluble oligomers may represent an intermediate stage on the path to fibril formation. Copper binding may promote oligomerization. Interacts with GRB2, APP, ERI3/PRNPIP and SYN1. Mislocalized cytosolically exposed PrP interacts with MGRN1; this interaction alters MGRN1 subcellular location and causes lysosomal enlargement. Interacts with KIAA1191.

The protein localises to the cell membrane. It is found in the golgi apparatus. In terms of biological role, its primary physiological function is unclear. Has cytoprotective activity against internal or environmental stresses. May play a role in neuronal development and synaptic plasticity. May be required for neuronal myelin sheath maintenance. May play a role in iron uptake and iron homeostasis. Soluble oligomers are toxic to cultured neuroblastoma cells and induce apoptosis (in vitro). Association with GPC1 (via its heparan sulfate chains) targets PRNP to lipid rafts. Also provides Cu(2+) or Zn(2+) for the ascorbate-mediated GPC1 deaminase degradation of its heparan sulfate side chains. This is Major prion protein 2 from Tragelaphus strepsiceros (Greater kudu).